We begin with the raw amino-acid sequence, 125 residues long: SKP1-like protein 7 (125 aa).

An interaction with the F-box domain of F-box proteins region spans residues 94–125 (MNAAYDLHIKSLLALAYQTVADMVNDNKWAFE).

Belongs to the SKP1 family. In terms of assembly, part of a SCF (SKP1-cullin-F-box) protein ligase complex. Restricted to siliques.

The protein resides in the nucleus. It participates in protein modification; protein ubiquitination. Functionally, involved in ubiquitination and subsequent proteasomal degradation of target proteins. Together with CUL1, RBX1 and a F-box protein, it forms a SCF E3 ubiquitin ligase complex. The functional specificity of this complex depends on the type of F-box protein. In the SCF complex, it serves as an adapter that links the F-box protein to CUL1. The chain is SKP1-like protein 7 (ASK7) from Arabidopsis thaliana (Mouse-ear cress).